The sequence spans 318 residues: Cytochrome f (318 aa).

Positions 1–32 (MQNKNNYNWLKEWVIRSFLLLTLLTWPSVSNA) are cleaved as a signal peptide. Tyr-33, Cys-53, Cys-56, and His-57 together coordinate heme. A helical transmembrane segment spans residues 284 to 304 (IQGLLLFFASVVLAQIFLVLK).

The protein belongs to the cytochrome f family. As to quaternary structure, the 4 large subunits of the cytochrome b6-f complex are cytochrome b6, subunit IV (17 kDa polypeptide, petD), cytochrome f and the Rieske protein, while the 4 small subunits are PetG, PetL, PetM and PetN. The complex functions as a dimer. Heme serves as cofactor.

The protein localises to the plastid. It is found in the chloroplast thylakoid membrane. Component of the cytochrome b6-f complex, which mediates electron transfer between photosystem II (PSII) and photosystem I (PSI), cyclic electron flow around PSI, and state transitions. The protein is Cytochrome f of Angiopteris evecta (Mule's foot fern).